We begin with the raw amino-acid sequence, 202 residues long: Solute carrier family 66 member 3 (202 aa).

Residues 1–19 (MEAALLGLCNWSTLGVCAA) form the signal peptide. A run of 4 helical transmembrane segments spans residues 33–53 (SARGLSLPSLLLELAGFLVFL), 64–84 (LTYLEYPILIAQDVILLLCIF), 97–117 (IAVLVSSWFILALQKWIIDLA), and 171–191 (FTILLRFVIMLALNIWVTVTV).

The protein resides in the membrane. The protein is Solute carrier family 66 member 3 of Homo sapiens (Human).